Reading from the N-terminus, the 131-residue chain is Profilin (131 aa).

The protein belongs to the profilin family. As to quaternary structure, occurs in many kinds of cells as a complex with monomeric actin in a 1:1 ratio.

Its subcellular location is the cytoplasm. The protein resides in the cytoskeleton. Its function is as follows. Binds to actin and affects the structure of the cytoskeleton. At high concentrations, profilin prevents the polymerization of actin, whereas it enhances it at low concentrations. By binding to PIP2, it inhibits the formation of IP3 and DG. This chain is Profilin, found in Citrus sinensis (Sweet orange).